Consider the following 427-residue polypeptide: Adenylosuccinate synthetase (427 aa).

GTP is bound by residues 12–18 (GDEGKGK) and 40–42 (GHT). Residue D13 is the Proton acceptor of the active site. Mg(2+)-binding residues include D13 and G40. IMP contacts are provided by residues 13 to 16 (DEGK), 38 to 41 (NAGH), T128, R142, Q223, T238, and R302. The active-site Proton donor is H41. Position 298–304 (298–304 (TTTGRPR)) interacts with substrate. Residues R304, 330–332 (KLD), and 412–414 (GVG) each bind GTP.

It belongs to the adenylosuccinate synthetase family. In terms of assembly, homodimer. Mg(2+) serves as cofactor.

It is found in the cytoplasm. It carries out the reaction IMP + L-aspartate + GTP = N(6)-(1,2-dicarboxyethyl)-AMP + GDP + phosphate + 2 H(+). It functions in the pathway purine metabolism; AMP biosynthesis via de novo pathway; AMP from IMP: step 1/2. In terms of biological role, plays an important role in the de novo pathway of purine nucleotide biosynthesis. Catalyzes the first committed step in the biosynthesis of AMP from IMP. The protein is Adenylosuccinate synthetase of Pelotomaculum thermopropionicum (strain DSM 13744 / JCM 10971 / SI).